The sequence spans 522 residues: Glycerol kinase (522 aa).

Position 15 (T15) interacts with substrate. R19 serves as a coordination point for ATP. Residues 89-90, Y143, and 255-256 contribute to the substrate site; these read RE and DQ. ATP contacts are provided by residues T276, G321, and 430–434; that span reads GATAN.

Belongs to the FGGY kinase family. As to expression, highly expressed in germinating seeds and senescent leaves, and at lower levels in roots, leaves, flowers and siliques.

It localises to the cytoplasm. The protein localises to the cytosol. It carries out the reaction glycerol + ATP = sn-glycerol 3-phosphate + ADP + H(+). It functions in the pathway polyol metabolism; glycerol degradation via glycerol kinase pathway; sn-glycerol 3-phosphate from glycerol: step 1/1. Key enzyme in the regulation of glycerol uptake and metabolism. Required for resistance to nonhost Pseudomonas bacteria and to the pathogenic fungus B.cinerea. The sequence is that of Glycerol kinase (GLPK) from Arabidopsis thaliana (Mouse-ear cress).